A 607-amino-acid polypeptide reads, in one-letter code: Rap1 GTPase-GDP dissociation stimulator 1-A (607 aa).

ARM repeat units follow at residues 79–118 (ELMRIPCVEAGLIPPLVQLLHSKDQEVLLQTGRALGNICY), 170–211 (DSLQ…NLAE), 347–390 (DGNC…NLAI), 391–431 (PVVN…MLID), and 479–519 (SKDV…LIAA).

As to quaternary structure, interacts with ralB. Probably interacts with the post-translationally isoprenylated (geranyl-geranylation) forms of ral proteins. Interacts with both GDP-bound and GTP-bound forms of ralA, but interaction is much stronger with ralA-GDP. Weakly expressed in adult tissues with highest levels found in spleen, kidney, skin and A6 cells.

The protein localises to the cytoplasm. It localises to the cytosol. The protein resides in the endoplasmic reticulum. It is found in the mitochondrion. Its function is as follows. Stimulates GDP/GTP exchange reaction of a group of small GTP-binding proteins (G proteins) including Rap1a/Rap1b, RhoA, RhoB and KRas, by stimulating the dissociation of GDP from and the subsequent binding of GTP to each small G protein. In Xenopus laevis (African clawed frog), this protein is Rap1 GTPase-GDP dissociation stimulator 1-A (rap1gds1-a).